We begin with the raw amino-acid sequence, 446 residues long: Divalent metal cation transporter MntH (446 aa).

The next 11 membrane-spanning stretches (helical) occupy residues 32–52, 59–79, 107–127, 139–159, 168–188, 205–225, 264–284, 303–323, 355–375, 381–401, and 420–440; these read LAFL…GNWI, AQFG…AMLL, AIIF…AEVI, IPLI…LFIM, AIVG…VYIS, IIAN…TIMP, SIAF…FYGV, PVLG…ALLA, LVTR…FRGN, QLLV…LIPL, and VNIC…YLII.

The protein belongs to the NRAMP family.

The protein resides in the cell membrane. Functionally, h(+)-stimulated, divalent metal cation uptake system. The chain is Divalent metal cation transporter MntH from Staphylococcus haemolyticus (strain JCSC1435).